We begin with the raw amino-acid sequence, 272 residues long: Protein SSO0103 (272 aa).

This sequence belongs to the CinA family.

This chain is Protein SSO0103, found in Saccharolobus solfataricus (strain ATCC 35092 / DSM 1617 / JCM 11322 / P2) (Sulfolobus solfataricus).